The sequence spans 180 residues: Napin (180 aa).

Positions 1-21 (MANKLFLVSATLAFFFLLTNA) are cleaved as a signal peptide. Propeptides lie at residues 22–38 (SIYR…ATNP) and 75–94 (PSWT…NPQG).

The protein belongs to the 2S seed storage albumins family. In terms of assembly, the mature protein consists of a small and a large chain linked by disulfide bonds. As to expression, cotyledons and the axis.

Functionally, the small, basic, water-soluble napins are one of the two major kinds of storage proteins synthesized in the seed during its maturation. The polypeptide is Napin (NAP1) (Brassica napus (Rape)).